Reading from the N-terminus, the 427-residue chain is Enolase (427 aa).

Q163 is a (2R)-2-phosphoglycerate binding site. E205 serves as the catalytic Proton donor. D242, E285, and D312 together coordinate Mg(2+). (2R)-2-phosphoglycerate contacts are provided by K337, R366, S367, and K388. K337 serves as the catalytic Proton acceptor.

This sequence belongs to the enolase family. It depends on Mg(2+) as a cofactor.

Its subcellular location is the cytoplasm. It localises to the secreted. It is found in the cell surface. The enzyme catalyses (2R)-2-phosphoglycerate = phosphoenolpyruvate + H2O. It participates in carbohydrate degradation; glycolysis; pyruvate from D-glyceraldehyde 3-phosphate: step 4/5. Its function is as follows. Catalyzes the reversible conversion of 2-phosphoglycerate (2-PG) into phosphoenolpyruvate (PEP). It is essential for the degradation of carbohydrates via glycolysis. This chain is Enolase, found in Laribacter hongkongensis (strain HLHK9).